The chain runs to 598 residues: (+)-bornyl diphosphate synthase, chloroplastic (598 aa).

The N-terminal 54 residues, 1-54, are a transit peptide targeting the chloroplast; that stretch reads MSIISMNVSILSKPLNCLHNLERRPSKALLVPCTAPTARLRASCSSKLQEAHQI. Arg-314 contacts substrate. Positions 351 and 355 each coordinate Mg(2+). The DDXXD motif signature appears at 351–355; sequence DDIYD. Arg-493 contributes to the substrate binding site. Residues Asp-496, Thr-500, and Glu-504 each contribute to the Mg(2+) site. Residue Thr-500 coordinates substrate. Lys-512 is a binding site for substrate.

This sequence belongs to the terpene synthase family. In terms of assembly, homodimer. It depends on Mg(2+) as a cofactor.

The protein localises to the plastid. The protein resides in the chloroplast. It carries out the reaction (2E)-geranyl diphosphate = (2S,4R)-bornyl diphosphate. It catalyses the reaction (2E)-geranyl diphosphate = (1R,4S)-camphene + diphosphate. The enzyme catalyses (2E)-geranyl diphosphate = (1R,5R)-alpha-pinene + diphosphate. It participates in terpene metabolism; (R)-camphor biosynthesis. Catalyzes the formation of the (+)-camphor precursor (+)-bornyl diphosphate from geranyl diphosphate. The enzyme also produces significant amounts of (+)-alpha-pinene, (+)-camphene, and (+-)-limonene. The sequence is that of (+)-bornyl diphosphate synthase, chloroplastic from Salvia officinalis (Sage).